The following is a 510-amino-acid chain: NAD(P)H-quinone oxidoreductase subunit 2 B, chloroplastic (510 aa).

The next 13 membrane-spanning stretches (helical) occupy residues 24–44, 57–77, 99–119, 124–144, 150–170, 183–203, 229–249, 295–315, 323–343, 347–367, 395–415, 418–438, and 484–504; these read LLLFHGSFILPECILIFGLIL, IPWLYFISSTSLVMSITALLF, IFQFLILLCSTLCIPLSVEYI, MAITEFLLFVLTATLGGMFLC, ITIFVAPECFSLCSYLLSGYT, YLLMGGASSSILVHGFSWLYG, ISIALIFITVGIGFKLSPAPF, WHLLLEILAILSMILGNLVAI, MLAYSSIGQIGYVIIGIIVGD, GYASMITYMLFYISMNLGTFA, ALSSALCLLSLGGLPPLAGFF, LHLFWCGWQAGLYFLVSIGLL, and MIVCVIASTIPGISMNPIIAI.

The protein belongs to the complex I subunit 2 family. NDH is composed of at least 16 different subunits, 5 of which are encoded in the nucleus.

The protein resides in the plastid. The protein localises to the chloroplast thylakoid membrane. The catalysed reaction is a plastoquinone + NADH + (n+1) H(+)(in) = a plastoquinol + NAD(+) + n H(+)(out). It carries out the reaction a plastoquinone + NADPH + (n+1) H(+)(in) = a plastoquinol + NADP(+) + n H(+)(out). In terms of biological role, NDH shuttles electrons from NAD(P)H:plastoquinone, via FMN and iron-sulfur (Fe-S) centers, to quinones in the photosynthetic chain and possibly in a chloroplast respiratory chain. The immediate electron acceptor for the enzyme in this species is believed to be plastoquinone. Couples the redox reaction to proton translocation, and thus conserves the redox energy in a proton gradient. This Ceratophyllum demersum (Rigid hornwort) protein is NAD(P)H-quinone oxidoreductase subunit 2 B, chloroplastic.